Consider the following 219-residue polypeptide: MRMRRKPWARPELEACDFFVANPKENKGNWKNTFKNTENPIYLELGCGKGTFMAVHGSDNPNINYIAIDIKDEVLVLAKRSIEKAYEEKNKALDNVKLMPQEIALIDTILDSNDKIERIYINFCNPWPKDRHKKRRLTHTRQLTKYRDFLVDGGEIHFKTDDDELFEESLEYFKECNFEITYITRDLHNSGYEYNVVTEHEEMFSKQGIKIKFLIAKKL.

S-adenosyl-L-methionine-binding residues include E44, D69, E102, and N125. Residues K129 and D161 each coordinate substrate.

Belongs to the class I-like SAM-binding methyltransferase superfamily. TrmB family.

It carries out the reaction guanosine(46) in tRNA + S-adenosyl-L-methionine = N(7)-methylguanosine(46) in tRNA + S-adenosyl-L-homocysteine. Its pathway is tRNA modification; N(7)-methylguanine-tRNA biosynthesis. Functionally, catalyzes the formation of N(7)-methylguanine at position 46 (m7G46) in tRNA. This is tRNA (guanine-N(7)-)-methyltransferase from Clostridium perfringens (strain 13 / Type A).